A 298-amino-acid polypeptide reads, in one-letter code: Tyrosine recombinase XerC (298 aa).

The Core-binding (CB) domain maps to 1–85 (MQQQLDAYCA…AVRGLYHYLN (85 aa)). The Tyr recombinase domain occupies 106–285 (RLPKTLDTDR…DFQHLAAVYD (180 aa)). Residues Arg146, Lys170, His237, Arg240, and His263 contribute to the active site. Residue Tyr272 is the O-(3'-phospho-DNA)-tyrosine intermediate of the active site.

This sequence belongs to the 'phage' integrase family. XerC subfamily. Forms a cyclic heterotetrameric complex composed of two molecules of XerC and two molecules of XerD.

It is found in the cytoplasm. Its function is as follows. Site-specific tyrosine recombinase, which acts by catalyzing the cutting and rejoining of the recombining DNA molecules. The XerC-XerD complex is essential to convert dimers of the bacterial chromosome into monomers to permit their segregation at cell division. It also contributes to the segregational stability of plasmids. The polypeptide is Tyrosine recombinase XerC (Pseudomonas fluorescens (strain ATCC BAA-477 / NRRL B-23932 / Pf-5)).